We begin with the raw amino-acid sequence, 102 residues long: Small ribosomal subunit protein uS17 (102 aa).

The tract at residues 1–27 (MEQTEEHTDTHTDEQDEAVDRNDRKER) is disordered.

This sequence belongs to the universal ribosomal protein uS17 family. Part of the 30S ribosomal subunit.

Its function is as follows. One of the primary rRNA binding proteins, it binds specifically to the 5'-end of 16S ribosomal RNA. The protein is Small ribosomal subunit protein uS17 of Salinibacter ruber (strain DSM 13855 / M31).